The chain runs to 278 residues: Manganese import system permease protein ScaB (278 aa).

The next 8 helical transmembrane spans lie at 18 to 38 (ALITAIAIGIVAGAVGCFIIL), 40 to 60 (GMSLMGDAISHAVLPGVALSF), 61 to 81 (ILGINFFIGAIAFGLLASILI), 136 to 156 (VTIGVGVAVLLVIVLLFRPLL), 172 to 192 (VKLYHYLLMVLLTLVSVTAMQ), 194 to 214 (VGTILIAAMLITPAATAYLYA), 220 to 240 (MMLLSSGLGALASILGLFIGY), and 244 to 264 (IAVGSCIVLTSAIFFLISFFI).

This sequence belongs to the ABC-3 integral membrane protein family.

Its subcellular location is the cell membrane. Functionally, part of an ABC transporter complex involved in manganese import. The chain is Manganese import system permease protein ScaB from Streptococcus pneumoniae.